Consider the following 485-residue polypeptide: Glutamyl-tRNA(Gln) amidotransferase subunit A (485 aa).

Residues lysine 76 and serine 151 each act as charge relay system in the active site. The Acyl-ester intermediate role is filled by serine 175.

This sequence belongs to the amidase family. GatA subfamily. Heterotrimer of A, B and C subunits.

It carries out the reaction L-glutamyl-tRNA(Gln) + L-glutamine + ATP + H2O = L-glutaminyl-tRNA(Gln) + L-glutamate + ADP + phosphate + H(+). Allows the formation of correctly charged Gln-tRNA(Gln) through the transamidation of misacylated Glu-tRNA(Gln) in organisms which lack glutaminyl-tRNA synthetase. The reaction takes place in the presence of glutamine and ATP through an activated gamma-phospho-Glu-tRNA(Gln). This Methylococcus capsulatus (strain ATCC 33009 / NCIMB 11132 / Bath) protein is Glutamyl-tRNA(Gln) amidotransferase subunit A.